The following is a 465-amino-acid chain: Sensor histidine kinase ZraS (465 aa).

Topologically, residues 1–14 (MSFIRLHKDAAATW) are cytoplasmic. A helical transmembrane segment spans residues 15 to 35 (LSRLLPAAIFILVGLFSIMVI). Over 36–202 (RDYGRESAAA…AATQAREWRN (167 aa)) the chain is Periplasmic. Residues 203–223 (TLIVLSALAAVLLATLLAFFW) form a helical membrane-spanning segment. The Cytoplasmic portion of the chain corresponds to 224-465 (HQRYQRSHRE…WLPVIARQQD (242 aa)). One can recognise a Histidine kinase domain in the interval 253–461 (GVAHEIRNPL…VFTIWLPVIA (209 aa)). A Phosphohistidine; by autocatalysis modification is found at His-256.

Autophosphorylated.

The protein resides in the cell inner membrane. The catalysed reaction is ATP + protein L-histidine = ADP + protein N-phospho-L-histidine.. Activity of the ZraS/ZraR two-component system is repressed by the zinc-bound form of ZraP, which probably interacts with the periplasmic region of ZraS. Part of the Zra signaling pathway, an envelope stress response (ESR) system composed of the periplasmic accessory protein ZraP, the histidine kinase ZraS and the transcriptional regulator ZraR. The ZraPSR system contributes to antibiotic resistance and is important for membrane integrity in the presence of membrane-targeting biocides. ZraS is a member of the two-component regulatory system ZraS/ZraR. Functions as a membrane-associated sensor kinase that phosphorylates ZraR in response to high concentrations of Zn(2+) or Pb(2+) in the medium. In Salmonella typhimurium (strain LT2 / SGSC1412 / ATCC 700720), this protein is Sensor histidine kinase ZraS.